The following is a 76-amino-acid chain: uncharacterized protein (76 aa).

This is an uncharacterized protein from Sulfolobus islandicus filamentous virus (isolate Iceland/Hveragerdi) (SIFV).